A 498-amino-acid polypeptide reads, in one-letter code: MNDINLFLAKLTYTSAKLTILPEIILILGLVAVVVIDLLSKGKNTFLLYKISMVTLLASAVILLWQWGFFTAYERSHARDFGNIFRFFLLICSLLSISSSVDYILCSKMSLAEFLLFKLAAGLGGMVLSCANDLVTIYVSLEFLALSSCFLSGYTKRDMRSNEATMKFLLMSGASSSLLLYGFSLLYGLSGGQLQLDKIVDGIIFNRYGSIIYLSAAFTTAGTAFKLSLFPFHQWTPDVYEGSPTPVVAFFSVTSKVAALALFTRLFGLIFPYFSNEWHVAVGLLATFSMILGNLIAVTQRSVKRMLAFSSISQIGYIMIGVLSADSGNGYASMITYTFIYILMNLGTFACITLFGLRTGTDNIRDYAGLYMKDPVLTFSLVLCLLSLGGMPPLSGFFGKLYLFWHGWKAGLYSLVLVALVTSVISIYYYLKIIKLMFTGKSGRSDTPLNSRQNSLVSLSISISKNSLEIAMIICALASTLSGIFIDPIIEITRNTFF.

A run of 14 helical transmembrane segments spans residues 18–38 (LTILPEIILILGLVAVVVIDL), 51–71 (ISMVTLLASAVILLWQWGFFT), 87–107 (FFLLICSLLSISSSVDYILCS), 111–131 (LAEFLLFKLAAGLGGMVLSCA), 134–154 (LVTIYVSLEFLALSSCFLSGY), 168–188 (FLLMSGASSSLLLYGFSLLYG), 211–231 (IIYLSAAFTTAGTAFKLSLFP), 244–264 (PTPVVAFFSVTSKVAALALFT), 278–298 (WHVAVGLLATFSMILGNLIAV), 306–326 (MLAFSSISQIGYIMIGVLSAD), 337–357 (YTFIYILMNLGTFACITLFGL), 379–399 (FSLVLCLLSLGGMPPLSGFFG), 411–431 (GLYSLVLVALVTSVISIYYYL), and 470–490 (IAMIICALASTLSGIFIDPII).

Belongs to the complex I subunit 2 family. In terms of assembly, NDH is composed of at least 16 different subunits, 5 of which are encoded in the nucleus.

It is found in the plastid. The protein resides in the chloroplast thylakoid membrane. The catalysed reaction is a plastoquinone + NADH + (n+1) H(+)(in) = a plastoquinol + NAD(+) + n H(+)(out). It carries out the reaction a plastoquinone + NADPH + (n+1) H(+)(in) = a plastoquinol + NADP(+) + n H(+)(out). Functionally, NDH shuttles electrons from NAD(P)H:plastoquinone, via FMN and iron-sulfur (Fe-S) centers, to quinones in the photosynthetic chain and possibly in a chloroplast respiratory chain. The immediate electron acceptor for the enzyme in this species is believed to be plastoquinone. Couples the redox reaction to proton translocation, and thus conserves the redox energy in a proton gradient. This Adiantum capillus-veneris (Maidenhair fern) protein is NAD(P)H-quinone oxidoreductase subunit 2, chloroplastic.